The chain runs to 294 residues: Protoheme IX farnesyltransferase (294 aa).

9 helical membrane-spanning segments follow: residues 13 to 33 (IIFGNLISVIGGFLLASKGVI), 35 to 55 (YPLFISTLLGVSLVVASGCVF), 84 to 104 (ISLIYASILGIAGIVLLYAAA), 107 to 127 (LAMQLAIIGFVVYVGVYSLYM), 132 to 152 (VYGTLIGSLSGAAPPVIGYCA), 162 to 182 (LILLLIFSLWQMPHSYAIAIF), 208 to 228 (IILYILAFMIATLMLAISGYA), 229 to 249 (GYKYLVVAAAVSVWWLGMALS), and 264 to 284 (FIFSIVAITSLSVMMSIDPHV).

The protein belongs to the UbiA prenyltransferase family. Protoheme IX farnesyltransferase subfamily.

The protein resides in the cell inner membrane. The enzyme catalyses heme b + (2E,6E)-farnesyl diphosphate + H2O = Fe(II)-heme o + diphosphate. The protein operates within porphyrin-containing compound metabolism; heme O biosynthesis; heme O from protoheme: step 1/1. Functionally, converts heme B (protoheme IX) to heme O by substitution of the vinyl group on carbon 2 of heme B porphyrin ring with a hydroxyethyl farnesyl side group. In Photorhabdus laumondii subsp. laumondii (strain DSM 15139 / CIP 105565 / TT01) (Photorhabdus luminescens subsp. laumondii), this protein is Protoheme IX farnesyltransferase.